The chain runs to 119 residues: Acidic phospholipase A2 CM-II (119 aa).

3 residues coordinate Ca(2+): Tyr-25, Gly-27, and Gly-29. The active site involves His-45. Residue Asp-46 coordinates Ca(2+). Asp-87 is an active-site residue.

Belongs to the phospholipase A2 family. Group II subfamily. D49 sub-subfamily. Ca(2+) serves as cofactor. Contains 6 disulfide bonds. In terms of tissue distribution, expressed by the venom gland.

It is found in the secreted. The catalysed reaction is a 1,2-diacyl-sn-glycero-3-phosphocholine + H2O = a 1-acyl-sn-glycero-3-phosphocholine + a fatty acid + H(+). Functionally, PLA2 catalyzes the calcium-dependent hydrolysis of the 2-acyl groups in 3-sn-phosphoglycerides. This is Acidic phospholipase A2 CM-II from Bitis nasicornis (Rhinoceros adder).